Reading from the N-terminus, the 185-residue chain is Large ribosomal subunit protein uL5 (185 aa).

Belongs to the universal ribosomal protein uL5 family. As to quaternary structure, part of the 50S ribosomal subunit; part of the 5S rRNA/L5/L18/L25 subcomplex. Contacts the 5S rRNA and the P site tRNA. Forms a bridge to the 30S subunit in the 70S ribosome.

This is one of the proteins that bind and probably mediate the attachment of the 5S RNA into the large ribosomal subunit, where it forms part of the central protuberance. In the 70S ribosome it contacts protein S13 of the 30S subunit (bridge B1b), connecting the 2 subunits; this bridge is implicated in subunit movement. Contacts the P site tRNA; the 5S rRNA and some of its associated proteins might help stabilize positioning of ribosome-bound tRNAs. In Bartonella bacilliformis (strain ATCC 35685 / KC583 / Herrer 020/F12,63), this protein is Large ribosomal subunit protein uL5.